A 221-amino-acid chain; its full sequence is Small ribosomal subunit protein uS3c (221 aa).

The region spanning 39–109 (LRDYLKTRLA…RVIVHVVEIA (71 aa)) is the KH type-2 domain.

Belongs to the universal ribosomal protein uS3 family. Part of the 30S ribosomal subunit.

The protein resides in the plastid. Its subcellular location is the chloroplast. This chain is Small ribosomal subunit protein uS3c (rps3), found in Nephroselmis olivacea (Green alga).